Here is a 766-residue protein sequence, read N- to C-terminus: Dipeptidyl peptidase 4 (766 aa).

Topologically, residues methionine 1–lysine 6 are cytoplasmic. Residues valine 7 to leucine 28 traverse the membrane as a helical; Signal-anchor for type II membrane protein segment. The Extracellular segment spans residues asparagine 29–proline 766. N-linked (GlcNAc...) asparagine glycosylation is found at asparagine 85, asparagine 92, asparagine 150, asparagine 219, asparagine 229, asparagine 281, and asparagine 321. Intrachain disulfides connect cysteine 328/cysteine 339, cysteine 385/cysteine 394, cysteine 444/cysteine 447, and cysteine 454/cysteine 472. The N-linked (GlcNAc...) asparagine glycan is linked to asparagine 520. The Charge relay system role is filled by serine 630. A disulfide bridge connects residues cysteine 649 and cysteine 762. Asparagine 685 carries N-linked (GlcNAc...) asparagine glycosylation. Catalysis depends on charge relay system residues aspartate 708 and histidine 740.

Belongs to the peptidase S9B family. DPPIV subfamily. In terms of assembly, monomer. Homodimer. Heterodimer with Seprase (FAP). Requires homodimerization for optimal dipeptidyl peptidase activity and T-cell costimulation. Found in a membrane raft complex, at least composed of BCL10, CARD11, DPP4 and IKBKB. Associates with collagen. Interacts with PTPRC; the interaction is enhanced in an interleukin-12-dependent manner in activated lymphocytes. Interacts (via extracellular domain) with ADA; does not inhibit its dipeptidyl peptidase activity. Interacts with CAV1 (via the N-terminus); the interaction is direct. Interacts (via cytoplasmic tail) with CARD11 (via PDZ domain); its homodimerization is necessary for interaction with CARD11. Interacts with IGF2R; the interaction is direct. Interacts with GPC3. Interacts with human coronavirus-EMC spike protein and acts as a receptor for this virus. (Microbial infection) Interacts with MERS coronavirus/MERS-CoV spike protein. In terms of processing, the soluble form (Dipeptidyl peptidase 4 soluble form also named SDPP) derives from the membrane form (Dipeptidyl peptidase 4 membrane form also named MDPP) by proteolytic processing. N- and O-Glycosylated. Post-translationally, phosphorylated. Mannose 6-phosphate residues in the carbohydrate moiety are necessary for interaction with IGF2R in activated T-cells. Mannose 6-phosphorylation is induced during T-cell activation. Expressed specifically in lymphatic vessels but not in blood vessels in the skin, small intestine, esophagus, ovary, breast and prostate glands. Not detected in lymphatic vessels in the lung, kidney, uterus, liver and stomach (at protein level). Expressed in the poorly differentiated crypt cells of the small intestine as well as in the mature villous cells. Expressed at very low levels in the colon.

The protein localises to the secreted. It is found in the cell membrane. Its subcellular location is the apical cell membrane. It localises to the cell projection. The protein resides in the invadopodium membrane. The protein localises to the lamellipodium membrane. It is found in the cell junction. Its subcellular location is the membrane raft. It catalyses the reaction Release of an N-terminal dipeptide, Xaa-Yaa-|-Zaa-, from a polypeptide, preferentially when Yaa is Pro, provided Zaa is neither Pro nor hydroxyproline.. With respect to regulation, inhibited by GPC3 and diprotin A. Its function is as follows. Cell surface glycoprotein receptor involved in the costimulatory signal essential for T-cell receptor (TCR)-mediated T-cell activation. Acts as a positive regulator of T-cell coactivation, by binding at least ADA, CAV1, IGF2R, and PTPRC. Its binding to CAV1 and CARD11 induces T-cell proliferation and NF-kappa-B activation in a T-cell receptor/CD3-dependent manner. Its interaction with ADA also regulates lymphocyte-epithelial cell adhesion. In association with FAP is involved in the pericellular proteolysis of the extracellular matrix (ECM), the migration and invasion of endothelial cells into the ECM. May be involved in the promotion of lymphatic endothelial cells adhesion, migration and tube formation. When overexpressed, enhanced cell proliferation, a process inhibited by GPC3. Also acts as a serine exopeptidase with a dipeptidyl peptidase activity that regulates various physiological processes by cleaving peptides in the circulation, including many chemokines, mitogenic growth factors, neuropeptides and peptide hormones such as brain natriuretic peptide 32. Removes N-terminal dipeptides sequentially from polypeptides having unsubstituted N-termini provided that the penultimate residue is proline. Functionally, (Microbial infection) Acts as a receptor for human coronavirus MERS-CoV-2. This chain is Dipeptidyl peptidase 4, found in Homo sapiens (Human).